The primary structure comprises 106 residues: Translation initiation factor 1A 2 (106 aa).

Residues M1 to R24 form a disordered region. Residues T18–T92 enclose the S1-like domain.

It belongs to the eIF-1A family.

Seems to be required for maximal rate of protein biosynthesis. Enhances ribosome dissociation into subunits and stabilizes the binding of the initiator Met-tRNA(I) to 40 S ribosomal subunits. The sequence is that of Translation initiation factor 1A 2 (eIF1A2) from Methanosarcina mazei (strain ATCC BAA-159 / DSM 3647 / Goe1 / Go1 / JCM 11833 / OCM 88) (Methanosarcina frisia).